The primary structure comprises 133 residues: Small ribosomal subunit protein uS8 (133 aa).

The protein belongs to the universal ribosomal protein uS8 family. Part of the 30S ribosomal subunit. Contacts proteins S5 and S12.

In terms of biological role, one of the primary rRNA binding proteins, it binds directly to 16S rRNA central domain where it helps coordinate assembly of the platform of the 30S subunit. The sequence is that of Small ribosomal subunit protein uS8 from Prochlorococcus marinus (strain MIT 9303).